A 915-amino-acid polypeptide reads, in one-letter code: Metabotropic glutamate receptor 7 (915 aa).

Positions 1–34 (MVQLGKLLRVLTLMKFPCCVLEVLLCVLAAAARG) are cleaved as a signal peptide. Topologically, residues 35–590 (QEMYAPHSIR…IIKLEWHSPW (556 aa)) are extracellular. C67 and C109 form a disulfide bridge. N98 is a glycosylation site (N-linked (GlcNAc...) asparagine). L-glutamate is bound by residues S159, 180 to 182 (AST), Y230, and D314. Disulfide bonds link C249–C541, C374–C390, C430–C437, C523–C542, C527–C545, C548–C560, and C563–C576. Residue K407 coordinates L-glutamate. 2 N-linked (GlcNAc...) asparagine glycosylation sites follow: N458 and N486. A glycan (N-linked (GlcNAc...) asparagine) is linked at N572. The helical transmembrane segment at 591–615 (AVIPVFLAMLGIIATIFVMATFIRY) threads the bilayer. Topologically, residues 616–627 (NDTPIVRASGRE) are cytoplasmic. A helical transmembrane segment spans residues 628-648 (LSYVLLTGIFLCYIITFLMIA). At 649–654 (KPDVAV) the chain is on the extracellular side. The helical transmembrane segment at 655-675 (CSFRRVFLGLGMCISYAALLT) threads the bilayer. Topologically, residues 676 to 702 (KTNRIYRIFEQGKKSVTAPRLISPTSQ) are cytoplasmic. The chain crosses the membrane as a helical span at residues 703–723 (LAITSSLISVQLLGVFIWFGV). Topologically, residues 724–753 (DPPNIIIDYDEHKTMNPEQARGVLKCDITD) are extracellular. The helical transmembrane segment at 754–775 (LQIICSLGYSILLMVTCTVYAI) threads the bilayer. Residues 776-788 (KTRGVPENFNEAK) lie on the Cytoplasmic side of the membrane. Residues 789–810 (PIGFTMYTTCIVWLAFIPIFFG) traverse the membrane as a helical segment. Over 811 to 825 (TAQSAEKLYIQTTTL) the chain is Extracellular. A helical transmembrane segment spans residues 826–850 (TISMNLSASVALGMLYMPKVYIIIF). Residues 851–915 (HPELNVQKRK…KYVSYNNLVI (65 aa)) lie on the Cytoplasmic side of the membrane. Positions 874–895 (SRLSHKPSDRPNGEAKTELCEN) are disordered. Positions 879-892 (KPSDRPNGEAKTEL) are enriched in basic and acidic residues. Residue S900 is modified to Phosphoserine.

The protein belongs to the G-protein coupled receptor 3 family. Homodimer. Interacts with PICK1. As to expression, widely distributed throughout the brain.

It is found in the cell membrane. In terms of biological role, G-protein coupled receptor activated by glutamate that regulates axon outgrowth through the MAPK-cAMP-PKA signaling pathway during neuronal development. Ligand binding causes a conformation change that triggers signaling via guanine nucleotide-binding proteins (G proteins) and modulates the activity of downstream effectors, such as adenylate cyclase that it inhibits. This Rattus norvegicus (Rat) protein is Metabotropic glutamate receptor 7 (Grm7).